We begin with the raw amino-acid sequence, 505 residues long: MKNEKKKSGIEPKVFFPPLIIVGILCWLTVRDLDAANVVINAVFSYVTNVWGWAFEWYMVVMLFGWFWLVFGPYAKKRLGDEKPEFSTASWIFMMFASCTSAAVLFWGSIEIYYYISTPPFGLEPNSTGAKEIGLAYSLFHWGPLPWATYSFLSVAFAYFFFVRKMDVIRPSSTLVPLVGEKHAKGLFGTIVDNFYLVALIFAMGTSLGLATPLVTECMQWLFGIPHTLQLDAIIITCWIILNAICVACGLQKGVRIASDVRSYLSFLMLGWVFIVSGASFIMNYFTDSVGMLLMHLPRMLFYTDAIGKGGFPQGWTVFYWAWWVIYAIQMSIFLARISRGRTVRELCFGMVMGLTASTWILWTVLGSNTLLLMDKNILNIPQLIEQHGVARAIIETWAALPLSTATMWGFFILCFIATVTLINACSYTLAMSTCREVRDGEEPPLLVRIGWSVLVGIIGIVLLALGGLKPIQTAIIAGGCPLFFINIMVTLSFIKDAKVHWKDK.

12 helical membrane-spanning segments follow: residues 10 to 30 (IEPK…WLTV), 51 to 71 (WGWA…WLVF), 92 to 112 (IFMM…SIEI), 143 to 163 (GPLP…FFFV), 195 to 215 (FYLV…TPLV), 231 to 251 (LDAI…ACGL), 263 to 283 (SYLS…SFIM), 316 to 336 (WTVF…IFLA), 347 to 367 (LCFG…TVLG), 403 to 423 (LSTA…VTLI), 446 to 466 (LLVR…LLAL), and 475 to 495 (AIIA…LSFI).

It belongs to the BCCT transporter (TC 2.A.15) family. CaiT subfamily. In terms of assembly, homotrimer.

It is found in the cell inner membrane. It catalyses the reaction 4-(trimethylamino)butanoate(in) + (R)-carnitine(out) = 4-(trimethylamino)butanoate(out) + (R)-carnitine(in). It functions in the pathway amine and polyamine metabolism; carnitine metabolism. In terms of biological role, catalyzes the exchange of L-carnitine for gamma-butyrobetaine. This Salmonella choleraesuis (strain SC-B67) protein is L-carnitine/gamma-butyrobetaine antiporter.